A 209-amino-acid polypeptide reads, in one-letter code: Bilin biosynthesis protein RpcF (209 aa).

Belongs to the CpcE/RpcE/PecE family.

Functionally, an enzyme involved in the biosynthesis of bilin. Might be involved in the specific attachment of phycoerythrobilin (PEB) to the R-phycocyanin II alpha chain. The polypeptide is Bilin biosynthesis protein RpcF (rpcF) (Synechococcus sp. (strain WH8020)).